The following is a 207-amino-acid chain: MPRYYCDYCDTYLTHDSPSVRKQHNAGYKHKANVRIYYQQFEEQQTQSLIDQRIKEHLGQTGGYQQVGAVFNQHMLARPRPPMMLPPGSMPMGMRPPVLPRPMMPPQGYMPPPGVPQMMAPPGAPLPPPPQNGILRPPGMAPIPGQGGGPPGMAPIPGQGGGPPPNYNGLPPPPPYHTNPAAPPSGNFNNPNLNNPNPSAESPESNE.

The Matrin-type zinc finger occupies 4–36; the sequence is YYCDYCDTYLTHDSPSVRKQHNAGYKHKANVRI. Composition is skewed to pro residues over residues 105–115 and 122–131; these read PPQGYMPPPGV and PGAPLPPPPQ. Residues 105–207 are disordered; it reads PPQGYMPPPG…PSAESPESNE (103 aa). Residues 132 to 144 are compositionally biased toward low complexity; the sequence is NGILRPPGMAPIP. Pro residues predominate over residues 162–183; that stretch reads GPPPNYNGLPPPPPYHTNPAAP. Positions 184–207 are enriched in low complexity; sequence PSGNFNNPNLNNPNPSAESPESNE.

The protein belongs to the U1 small nuclear ribonucleoprotein C family. U1 snRNP is composed of the 7 core Sm proteins B/B', D1, D2, D3, E, F and G that assemble in a heptameric protein ring on the Sm site of the small nuclear RNA to form the core snRNP, and at least 3 U1 snRNP-specific proteins U1-70K, U1-A and U1-C. U1-C interacts with U1 snRNA and the 5' splice-site region of the pre-mRNA.

Its subcellular location is the nucleus. Functionally, component of the spliceosomal U1 snRNP, which is essential for recognition of the pre-mRNA 5' splice-site and the subsequent assembly of the spliceosome. U1-C is directly involved in initial 5' splice-site recognition for both constitutive and regulated alternative splicing. The interaction with the 5' splice-site seems to precede base-pairing between the pre-mRNA and the U1 snRNA. Stimulates commitment or early (E) complex formation by stabilizing the base pairing of the 5' end of the U1 snRNA and the 5' splice-site region. This is U1 small nuclear ribonucleoprotein C from Arabidopsis thaliana (Mouse-ear cress).